The primary structure comprises 557 residues: 2,3-bisphosphoglycerate-independent phosphoglycerate mutase 1 (557 aa).

Mn(2+) is bound by residues Asp27 and Ser80. Ser80 (phosphoserine intermediate) is an active-site residue. Substrate contacts are provided by residues His139, 169–170 (RD), Arg205, Arg212, 285–288 (RADR), and Lys360. Asp429, His433, Asp470, His471, and His500 together coordinate Mn(2+).

Belongs to the BPG-independent phosphoglycerate mutase family. In terms of assembly, monomer. It depends on Mn(2+) as a cofactor.

The protein localises to the cytoplasm. The catalysed reaction is (2R)-2-phosphoglycerate = (2R)-3-phosphoglycerate. It functions in the pathway carbohydrate degradation; glycolysis; pyruvate from D-glyceraldehyde 3-phosphate: step 3/5. In terms of biological role, catalyzes the interconversion of 2-phosphoglycerate (2-PGA) and 3-phosphoglycerate (3-PGA). Required for guard cell function (e.g. blue light-, abscisic acid- (ABA), and low CO(2)-regulated stomatal movements) and fertility (e.g. pollen grains production). This is 2,3-bisphosphoglycerate-independent phosphoglycerate mutase 1 (PGM1) from Arabidopsis thaliana (Mouse-ear cress).